The sequence spans 509 residues: tRNA-2-methylthio-N(6)-dimethylallyladenosine synthase (509 aa).

The segment at 1-21 is disordered; sequence MNEKQKLESGQVHPSDKKSEK. The MTTase N-terminal domain maps to 66–184; sequence RKFYIRTYGC…LPELLSEAYL (119 aa). [4Fe-4S] cluster contacts are provided by C75, C111, C145, C221, C225, and C228. The Radical SAM core domain maps to 207–437; sequence RNGKIKGWVN…NALVNEISAK (231 aa). Residues 440–503 form the TRAM domain; the sequence is KEYEGKVVEV…TWSLDGEMVG (64 aa).

Belongs to the methylthiotransferase family. MiaB subfamily. As to quaternary structure, monomer. Requires [4Fe-4S] cluster as cofactor.

The protein localises to the cytoplasm. The enzyme catalyses N(6)-dimethylallyladenosine(37) in tRNA + (sulfur carrier)-SH + AH2 + 2 S-adenosyl-L-methionine = 2-methylsulfanyl-N(6)-dimethylallyladenosine(37) in tRNA + (sulfur carrier)-H + 5'-deoxyadenosine + L-methionine + A + S-adenosyl-L-homocysteine + 2 H(+). The catalysed reaction is N(6)-dimethylallyladenosine(37) in tRNA + (sulfur carrier)-SH + AH2 + S-adenosyl-L-methionine = 2-thio-N(6)-dimethylallyladenosine(37) in tRNA + (sulfur carrier)-H + 5'-deoxyadenosine + L-methionine + A + H(+). It carries out the reaction 2-thio-N(6)-dimethylallyladenosine(37) in tRNA + S-adenosyl-L-methionine = 2-methylsulfanyl-N(6)-dimethylallyladenosine(37) in tRNA + S-adenosyl-L-homocysteine + H(+). In terms of biological role, catalyzes the methylthiolation of N6-(dimethylallyl)adenosine (i(6)A), leading to the formation of 2-methylthio-N6-(dimethylallyl)adenosine (ms(2)i(6)A) at position 37 in tRNAs that read codons beginning with uridine. In Bacillus subtilis (strain 168), this protein is tRNA-2-methylthio-N(6)-dimethylallyladenosine synthase.